The sequence spans 435 residues: Nuclear hormone receptor family member nhr-28 (435 aa).

The nuclear receptor DNA-binding region spans 5–80; the sequence is KKPCSVCGEA…VGMRKSAVQR (76 aa). 2 consecutive NR C4-type zinc fingers follow at residues 8-28 and 44-63; these read CSVC…CRAC and CRAM…CRAC. Residues 84–106 form a disordered region; that stretch reads LFGRQDSSDGSNPRVSPSTSWPM. Positions 91–104 are enriched in polar residues; the sequence is SDGSNPRVSPSTSW. In terms of domain architecture, NR LBD spans 113-374; that stretch reads IEEPGMATLN…ETFYELVSGR (262 aa).

It belongs to the nuclear hormone receptor family.

It is found in the nucleus. Orphan nuclear receptor. This Caenorhabditis briggsae protein is Nuclear hormone receptor family member nhr-28.